The primary structure comprises 165 residues: MRAVSCFLYYGVAWIALGSWGASSSAERVSEMDIYEFESWVSCLDPEQVTCESQEGTHASYNRKTGQCEEQKGTECGGGENHFETLLKCNESCNDAPKPPCSLEVDYGVGRANIPRWYYDTNNATCEMFTYGGITGNKNNFESEEECKETCKGFSLLKKVNVTIN.

A signal peptide spans Met-1–Ala-26. BPTI/Kunitz inhibitor domains lie at Cys-43–Cys-93 and Cys-101–Cys-151. Intrachain disulfides connect Cys-43/Cys-93, Cys-51/Cys-76, Cys-68/Cys-89, Cys-101/Cys-151, and Cys-126/Cys-147. Asn-90 and Asn-123 each carry an N-linked (GlcNAc...) asparagine glycan. Residue Asn-161 is glycosylated (N-linked (GlcNAc...) asparagine).

As to quaternary structure, monomer. Interacts with host coagulation factor X/F10 (inactive and activated). As to expression, saliva (at protein level). Salivary gland.

The protein resides in the secreted. In terms of biological role, anticoagulant protein that modulates blood feeding of ticks on vertebrate species. Inhibits activation of host blood coagulation factor X (F10). Inhibits activity of host coagulation factor VIIa-tissue factor (F7-F3) complex in a factor X/Xa-dependent manner. Prevents interaction between host coagulation factor X and activated factor VIIIa (F8). The sequence is that of Ixolaris from Ixodes scapularis (Black-legged tick).